Reading from the N-terminus, the 333-residue chain is F420-dependent glucose-6-phosphate dehydrogenase (333 aa).

Asp-37 is a binding site for coenzyme F420-(gamma-Glu)n. His-38 acts as the Proton donor in catalysis. Coenzyme F420-(gamma-Glu)n-binding positions include Thr-74 and 105–106 (SG). The Proton acceptor role is filled by Glu-107. Coenzyme F420-(gamma-Glu)n is bound by residues Asn-110, 174-175 (GG), and 177-178 (VV). Substrate-binding residues include Thr-192, Lys-195, Lys-256, and Arg-280.

The protein belongs to the F420-dependent glucose-6-phosphate dehydrogenase family. Homodimer.

It carries out the reaction oxidized coenzyme F420-(gamma-L-Glu)(n) + D-glucose 6-phosphate + H(+) = 6-phospho-D-glucono-1,5-lactone + reduced coenzyme F420-(gamma-L-Glu)(n). Its function is as follows. Catalyzes the coenzyme F420-dependent oxidation of glucose 6-phosphate (G6P) to 6-phosphogluconolactone. The chain is F420-dependent glucose-6-phosphate dehydrogenase from Amycolatopsis mediterranei (strain U-32).